Here is a 423-residue protein sequence, read N- to C-terminus: Flavohemoprotein B (423 aa).

The region spanning 1–136 (MLSQKSIQII…VAQAFMDAEE (136 aa)) is the Globin domain. Residue His83 participates in heme b binding. Catalysis depends on charge relay system residues Tyr93 and Glu135. A reductase region spans residues 149-423 (WKDTREFVVD…LRGVKNIIEN (275 aa)). Residues 150–268 (KDTREFVVDR…SVPAGDFVVN (119 aa)) form the FAD-binding FR-type domain. FAD-binding positions include Tyr188 and 212 to 215 (RHYS). Residue 281–286 (GVGINP) coordinates NADP(+). 400–403 (LFGP) contacts FAD.

It belongs to the globin family. Two-domain flavohemoproteins subfamily. In the C-terminal section; belongs to the flavoprotein pyridine nucleotide cytochrome reductase family. FAD serves as cofactor. The cofactor is heme b.

Its subcellular location is the cytoplasm. The catalysed reaction is 2 nitric oxide + NADPH + 2 O2 = 2 nitrate + NADP(+) + H(+). It carries out the reaction 2 nitric oxide + NADH + 2 O2 = 2 nitrate + NAD(+) + H(+). Is involved in NO detoxification in an aerobic process, termed nitric oxide dioxygenase (NOD) reaction that utilizes O(2) and NAD(P)H to convert NO to nitrate, which protects the cell from various noxious nitrogen compounds. Therefore, plays a central role in the inducible response to nitrosative stress. In terms of biological role, in the presence of oxygen and NADH, it has NADH oxidase activity, which leads to the generation of superoxide and H(2)O(2). Under anaerobic conditions, it also exhibits nitric oxide reductase and FAD reductase activities. However, all these reactions are much lower than NOD activity. This is Flavohemoprotein B (fhbB) from Dictyostelium discoideum (Social amoeba).